A 469-amino-acid polypeptide reads, in one-letter code: Glutamine synthetase (469 aa).

The 85-residue stretch at 13-97 folds into the GS beta-grasp domain; sequence NEVKFVDLRF…IRCDILEPAT (85 aa). The 365-residue stretch at 105–469 folds into the GS catalytic domain; it reads PRSIAKRAEE…PLEFELYYSV (365 aa). Residues Glu130 and Glu132 each contribute to the Mg(2+) site. Residue Glu208 coordinates ATP. Mg(2+) contacts are provided by Glu213 and Glu221. L-glutamate contacts are provided by residues 265–266 and Gly266; that span reads NG. Residue His270 participates in Mg(2+) binding. Residues 272-274 and Ser274 each bind ATP; that span reads HQS. L-glutamate contacts are provided by Arg322, Glu328, and Arg340. ATP is bound by residues Arg340, Arg345, and Lys353. Residue Glu358 coordinates Mg(2+). Residue Arg360 coordinates L-glutamate. Position 398 is an O-AMP-tyrosine (Tyr398).

It belongs to the glutamine synthetase family. In terms of assembly, oligomer of 12 subunits arranged in the form of two hexameric ring. Requires Mg(2+) as cofactor.

It is found in the cytoplasm. It carries out the reaction L-glutamate + NH4(+) + ATP = L-glutamine + ADP + phosphate + H(+). Its activity is regulated as follows. The activity of this enzyme could be controlled by adenylation under conditions of abundant glutamine. Its function is as follows. Catalyzes the ATP-dependent biosynthesis of glutamine from glutamate and ammonia. The chain is Glutamine synthetase (glnAv) from Vibrio cholerae serotype O1 (strain ATCC 39315 / El Tor Inaba N16961).